The following is an 848-amino-acid chain: Dynein axonemal intermediate chain 4 (848 aa).

Disordered regions lie at residues 345–370 (SKANVLPKDQDQRLPGSTTEKNSETS) and 431–464 (EPEPEEPEDVLESAKHEEVEEESKKEEEEEIHAE). Polar residues predominate over residues 359 to 370 (PGSTTEKNSETS). The span at 442 to 456 (ESAKHEEVEEESKKE) shows a compositional bias: basic and acidic residues. WD repeat units follow at residues 534-574 (QSPY…NVPV), 583-631 (KHLG…DCYD), 658-698 (SRQA…QYLD), 702-742 (GHKG…PSLS), 745-784 (PATSVVYDVAWSPKSSYIFAAANENRVEIWDLHISTLDPL), and 790-829 (NPGIKFTTILFAKQTDCLLVGDSDGQVSVYELRNMPTVLE).

As to quaternary structure, part of the multisubunit axonemal dynein complex formed at least of two heavy chains and a number of intermediate and light chains. Associated with axonemal dynein subunits such as, DNAH2, DNAI3, and DYNLT1. Interacts with DYNLT1.

The protein localises to the cytoplasm. Its subcellular location is the cytoskeleton. The protein resides in the flagellum axoneme. It is found in the cilium axoneme. It localises to the dynein axonemal particle. Its function is as follows. Plays a critical role in the assembly of axonemal dynein complex, thereby playing a role in ciliary motility. This is Dynein axonemal intermediate chain 4 from Homo sapiens (Human).